The following is a 208-amino-acid chain: Putative dioxygenase RC0543 (208 aa).

Belongs to the intradiol ring-cleavage dioxygenase family.

This is Putative dioxygenase RC0543 from Rickettsia conorii (strain ATCC VR-613 / Malish 7).